Reading from the N-terminus, the 462-residue chain is Argininosuccinate lyase (462 aa).

It belongs to the lyase 1 family. Argininosuccinate lyase subfamily.

Its subcellular location is the cytoplasm. It carries out the reaction 2-(N(omega)-L-arginino)succinate = fumarate + L-arginine. The protein operates within amino-acid biosynthesis; L-arginine biosynthesis; L-arginine from L-ornithine and carbamoyl phosphate: step 3/3. The polypeptide is Argininosuccinate lyase (Bacillus cereus (strain ZK / E33L)).